Consider the following 176-residue polypeptide: Corrinoid adenosyltransferase (176 aa).

Residues 6–14 (TRTGDNGTT), lysine 24, 131–136 (RRLERI), and asparagine 155 each bind ATP.

The protein belongs to the Cob(I)alamin adenosyltransferase family.

The protein localises to the cytoplasm. The enzyme catalyses 2 cob(II)yrinate a,c diamide + reduced [electron-transfer flavoprotein] + 2 ATP = 2 adenosylcob(III)yrinate a,c-diamide + 2 triphosphate + oxidized [electron-transfer flavoprotein] + 3 H(+). It catalyses the reaction 2 cob(II)alamin + reduced [electron-transfer flavoprotein] + 2 ATP = 2 adenosylcob(III)alamin + 2 triphosphate + oxidized [electron-transfer flavoprotein] + 3 H(+). Its pathway is cofactor biosynthesis; adenosylcobalamin biosynthesis; adenosylcobalamin from cob(II)yrinate a,c-diamide: step 2/7. This is Corrinoid adenosyltransferase from Citrobacter freundii.